A 367-amino-acid chain; its full sequence is Probable ATP-dependent RNA helicase MJ0669 (367 aa).

Residues 6–34 carry the Q motif motif; the sequence is MNFNELNLSDNILNAIRNKGFEKPTDIQM. Residues 38–206 form the Helicase ATP-binding domain; sequence PLFLNDEYNI…KKYMGDYSFI (169 aa). Residue 51 to 58 participates in ATP binding; the sequence is ARTGSGKT. A DEAD box motif is present at residues 154–157; the sequence is DEAD. In terms of domain architecture, Helicase C-terminal spans 213–367; that stretch reads NIEQSYVEVN…KLKIKKLKFG (155 aa).

It belongs to the DEAD box helicase family. Homodimer.

It carries out the reaction ATP + H2O = ADP + phosphate + H(+). This Methanocaldococcus jannaschii (strain ATCC 43067 / DSM 2661 / JAL-1 / JCM 10045 / NBRC 100440) (Methanococcus jannaschii) protein is Probable ATP-dependent RNA helicase MJ0669.